The sequence spans 407 residues: Multidrug resistance protein MdtH (407 aa).

A run of 10 helical transmembrane segments spans residues 13–33 (CFLIIDNMFVVIGFYVVFPLI), 88–108 (LGFIIMSVANTPLLLCLSCML), 139–159 (VLMLEDSMCAIIGIVLGTWLL), 163–183 (FKLVCFTGAILFFIAGVFNAW), 210–230 (FVIYVFTLTGYYILSAQVMLM), 247–267 (WMYIIEAILSLLLIMPITWWS), 277–297 (LMVGLITMIISLFPIGLVKNL), 298–318 (HTLLILISLFYIGSIIAEPAR), 340–360 (LSLALGGTVGYSGSGWLYDIG), and 368–388 (LPWIILSIIGLITLLGLYCQF).

This sequence belongs to the major facilitator superfamily. DHA1 family. MdtH (TC 2.A.1.2.21) subfamily.

The protein resides in the cell inner membrane. This chain is Multidrug resistance protein MdtH, found in Blochmanniella pennsylvanica (strain BPEN).